The sequence spans 364 residues: MDSSRTIGLYFDSAHSSSNLLAFPIVLQDTGDGKKQIAPQYRIQRLDLWTDSKEDSVFITTYGFIFQVGNEEATVGIIDDKPKRELLSAAMLCLGSVPNTGDLIELARACLTMMVTCKKSATNTERMVFSVVQAPQVLQSCRVVANKYSSVNAVKHVKAPEKIPGSGTLEYKVNFVSLTVVPKKDVYKIPAAVLKISGSSLYNLALNVTINVEVDPRSPLVKSLSKSDSGYYANLFLHIGLMTTVDRKGKKVTFDKLEKKIRSLDLSVGLSDVLGPSVLVKARGARTKLLAPFFSSSGTACYPIANASPQVAKILWSQTACLRSVKIIIQAGTQRAVAVTADHEVTSTKLEKGHTLAKYNPFKK.

The FPIV motif signature appears at 23–26 (FPIV).

Belongs to the morbillivirus/respirovirus/rubulavirus M protein family.

It is found in the virion. Its function is as follows. The M protein has a crucial role in virus assembly and interacts with the RNP complex as well as with the viral membrane. In Gallus gallus (Chicken), this protein is Matrix protein (M).